Consider the following 243-residue polypeptide: Uridylate kinase (243 aa).

ATP is bound at residue 15–18 (KISG). Gly57 serves as a coordination point for UMP. The ATP site is built by Gly58 and Arg62. UMP-binding positions include Asp77 and 138-145 (TGNPFFTT). Thr165, Phe171, and Asp174 together coordinate ATP.

Belongs to the UMP kinase family. In terms of assembly, homohexamer.

The protein resides in the cytoplasm. It catalyses the reaction UMP + ATP = UDP + ADP. It participates in pyrimidine metabolism; CTP biosynthesis via de novo pathway; UDP from UMP (UMPK route): step 1/1. Its activity is regulated as follows. Inhibited by UTP. In terms of biological role, catalyzes the reversible phosphorylation of UMP to UDP. This Blochmanniella floridana protein is Uridylate kinase.